The sequence spans 951 residues: Serine/threonine-protein kinase 10 (951 aa).

Positions W36–V294 constitute a Protein kinase domain. ATP is bound by residues L42–V50 and K65. The active-site Proton acceptor is D157. A compositionally biased stretch (acidic residues) spans E319 to S330. A disordered region spans residues E319 to S479. Residues D331 to A343 show a composition bias toward polar residues. Over residues G345 to V356 the composition is skewed to basic and acidic residues. Polar residues predominate over residues P364–I373. Composition is skewed to basic and acidic residues over residues H374 to V394 and H410 to G427. Positions A429–R443 are enriched in polar residues. A phosphoserine; by PLK1 mark is found at S483, S487, and S491. A coiled-coil region spans residues E583–R723. The span at Q785 to T800 shows a compositional bias: basic and acidic residues. Residues Q785–M804 are disordered. Residues R898–E928 are a coiled coil. The tract at residues A930–S951 is disordered.

Belongs to the protein kinase superfamily. STE Ser/Thr protein kinase family. STE20 subfamily. In terms of assembly, homodimer. Autophosphorylates. Phosphorylated by plk1/plx1, suggesting the existence of a feedback loop with plk1/plx1. activation of the protein.

Its subcellular location is the cell membrane. The catalysed reaction is L-seryl-[protein] + ATP = O-phospho-L-seryl-[protein] + ADP + H(+). It catalyses the reaction L-threonyl-[protein] + ATP = O-phospho-L-threonyl-[protein] + ADP + H(+). Its function is as follows. May act as a polo kinase kinase by mediating phosphorylation of plk1/plx1 and subsequent activation of plk1/plx1 during oocyte maturation. The polypeptide is Serine/threonine-protein kinase 10 (stk10) (Xenopus tropicalis (Western clawed frog)).